The primary structure comprises 322 residues: Porphobilinogen deaminase (322 aa).

Cys252 carries the post-translational modification S-(dipyrrolylmethanemethyl)cysteine.

Belongs to the HMBS family. As to quaternary structure, monomer. The cofactor is dipyrromethane.

It carries out the reaction 4 porphobilinogen + H2O = hydroxymethylbilane + 4 NH4(+). The protein operates within porphyrin-containing compound metabolism; protoporphyrin-IX biosynthesis; coproporphyrinogen-III from 5-aminolevulinate: step 2/4. Tetrapolymerization of the monopyrrole PBG into the hydroxymethylbilane pre-uroporphyrinogen in several discrete steps. The polypeptide is Porphobilinogen deaminase (Caulobacter vibrioides (strain ATCC 19089 / CIP 103742 / CB 15) (Caulobacter crescentus)).